The following is a 254-amino-acid chain: Bacteriorhodopsin-I (254 aa).

The propeptide occupies 1-6 (MSQLAL). Gln-7 is subject to Pyrrolidone carboxylic acid. Helical transmembrane passes span 16-36 (EGIWLALGTIGMLLGMLYFIA), 51-71 (VITILIPAIAAASYLSMFFGF), 91-111 (YADWLFTTPLLLLDIGLLAGA), 116-136 (IGALVGIDAFMIVTGLVATLT), 144-164 (AFWTISTISMVFLLYYLVAVF), 185-205 (IILVTWAIYPVAWLVGTEGLA), and 212-232 (ETLLFMVLDLVAKVGFGFILL). An N6-(retinylidene)lysine modification is found at Lys-224.

It belongs to the archaeal/bacterial/fungal opsin family. Post-translationally, the covalent binding of retinal to the apoprotein, bacterioopsin, generates bacteriorhodopsin.

The protein localises to the cell membrane. In terms of biological role, light-driven proton pump. The polypeptide is Bacteriorhodopsin-I (bop1) (Haloquadratum walsbyi (strain DSM 16854 / JCM 12705 / C23)).